A 350-amino-acid chain; its full sequence is Probable poly-beta-1,6-N-acetyl-D-glucosamine export protein (350 aa).

10 helical membrane passes run 7-29, 44-66, 79-101, 116-138, 145-167, 187-204, 211-233, 243-262, 269-291, and 306-328; these read ELVY…TQIT, FYIR…LLTT, TRVK…SESL, LLGQ…SYII, LFNS…YYFT, IIFG…MGYN, FLER…FIAL, SFSY…ILGI, MLFN…HPII, and TMVF…GMIL.

Belongs to the acyltransferase 3 family.

The protein resides in the cell membrane. Its function is as follows. Presumably involved in the export of the biofilm adhesin polysaccharide poly-beta-1,6-N-acetyl-D-glucosamine (PNAG, also referred to as PIA) across the cell membrane. This is Probable poly-beta-1,6-N-acetyl-D-glucosamine export protein (icaC) from Staphylococcus aureus (strain MRSA252).